Reading from the N-terminus, the 344-residue chain is GTP 3',8-cyclase (344 aa).

Residues 19–239 form the Radical SAM core domain; that stretch reads PFGRTIDYLR…ANYTLTDLPD (221 aa). Arg-28 contacts GTP. The [4Fe-4S] cluster site is built by Cys-35 and Cys-39. Tyr-41 lines the S-adenosyl-L-methionine pocket. Cys-42 contributes to the [4Fe-4S] cluster binding site. Arg-77 contributes to the GTP binding site. Gly-81 contributes to the S-adenosyl-L-methionine binding site. Thr-111 serves as a coordination point for GTP. S-adenosyl-L-methionine is bound at residue Ser-135. GTP is bound at residue Lys-171. Met-205 lines the S-adenosyl-L-methionine pocket. [4Fe-4S] cluster is bound by residues Cys-268 and Cys-271. 273–275 contributes to the GTP binding site; it reads RVR. A [4Fe-4S] cluster-binding site is contributed by Cys-285.

Belongs to the radical SAM superfamily. MoaA family. Monomer and homodimer. Requires [4Fe-4S] cluster as cofactor.

It catalyses the reaction GTP + AH2 + S-adenosyl-L-methionine = (8S)-3',8-cyclo-7,8-dihydroguanosine 5'-triphosphate + 5'-deoxyadenosine + L-methionine + A + H(+). It participates in cofactor biosynthesis; molybdopterin biosynthesis. Functionally, catalyzes the cyclization of GTP to (8S)-3',8-cyclo-7,8-dihydroguanosine 5'-triphosphate. The chain is GTP 3',8-cyclase from Rhodopseudomonas palustris (strain TIE-1).